We begin with the raw amino-acid sequence, 532 residues long: Flavin-containing monooxygenase 3 (532 aa).

Residues 9–13, Glu32, 40–41, and 61–62 each bind FAD; these read GAGVS, LW, and NS. NADP(+) is bound by residues 60-61 and 195-198; these read SN and SGCD. Ser401 bears the Phosphoserine mark. Residues 510 to 530 form a helical membrane-spanning segment; that stretch reads FFFHWLKLFAIPILLIAVFLV.

Belongs to the FMO family. FAD is required as a cofactor. Liver.

The protein localises to the microsome membrane. It is found in the endoplasmic reticulum membrane. It carries out the reaction trimethylamine + NADPH + O2 = trimethylamine N-oxide + NADP(+) + H2O. The catalysed reaction is N,N-dimethylaniline + NADPH + O2 + H(+) = N,N-dimethylaniline N-oxide + NADP(+) + H2O. It catalyses the reaction hypotaurine + NADPH + O2 + H(+) = taurine + NADP(+) + H2O. The enzyme catalyses (S)-nicotine + NADPH + O2 = trans-(S)-nicotine N(1')-oxide + NADP(+) + H2O. It carries out the reaction albendazole + NADPH + O2 + H(+) = albendazole S-oxide + NADP(+) + H2O. Its function is as follows. Essential hepatic enzyme that catalyzes the oxygenation of a wide variety of nitrogen- and sulfur-containing compounds including drugs as well as dietary compounds. Plays an important role in the metabolism of trimethylamine (TMA), via the production of trimethylamine N-oxide (TMAO) metabolite. TMA is generated by the action of gut microbiota using dietary precursors such as choline, choline containing compounds, betaine or L-carnitine. By regulating TMAO concentration, FMO3 directly impacts both platelet responsiveness and rate of thrombus formation. The polypeptide is Flavin-containing monooxygenase 3 (FMO3) (Homo sapiens (Human)).